The following is a 316-amino-acid chain: tRNA-cytidine(32) 2-sulfurtransferase (316 aa).

The PP-loop motif motif lies at 45-50 (SGGKDS). Residues C120, C123, and C211 each coordinate [4Fe-4S] cluster.

The protein belongs to the TtcA family. As to quaternary structure, homodimer. Requires Mg(2+) as cofactor. [4Fe-4S] cluster serves as cofactor.

The protein resides in the cytoplasm. It carries out the reaction cytidine(32) in tRNA + S-sulfanyl-L-cysteinyl-[cysteine desulfurase] + AH2 + ATP = 2-thiocytidine(32) in tRNA + L-cysteinyl-[cysteine desulfurase] + A + AMP + diphosphate + H(+). It participates in tRNA modification. Functionally, catalyzes the ATP-dependent 2-thiolation of cytidine in position 32 of tRNA, to form 2-thiocytidine (s(2)C32). The sulfur atoms are provided by the cysteine/cysteine desulfurase (IscS) system. This is tRNA-cytidine(32) 2-sulfurtransferase from Shewanella sediminis (strain HAW-EB3).